We begin with the raw amino-acid sequence, 435 residues long: ATP-dependent protease ATPase subunit HslU (435 aa).

ATP contacts are provided by residues Val18, 60–65 (GVGKTE), Asp248, Glu313, and Arg385.

It belongs to the ClpX chaperone family. HslU subfamily. A double ring-shaped homohexamer of HslV is capped on each side by a ring-shaped HslU homohexamer. The assembly of the HslU/HslV complex is dependent on binding of ATP.

It is found in the cytoplasm. Functionally, ATPase subunit of a proteasome-like degradation complex; this subunit has chaperone activity. The binding of ATP and its subsequent hydrolysis by HslU are essential for unfolding of protein substrates subsequently hydrolyzed by HslV. HslU recognizes the N-terminal part of its protein substrates and unfolds these before they are guided to HslV for hydrolysis. The sequence is that of ATP-dependent protease ATPase subunit HslU from Rhodospirillum rubrum (strain ATCC 11170 / ATH 1.1.1 / DSM 467 / LMG 4362 / NCIMB 8255 / S1).